The following is a 210-amino-acid chain: Ribonuclease HII (210 aa).

The RNase H type-2 domain occupies 16-207 (AIVVGVDEVG…VKKCIISTKN (192 aa)). A divalent metal cation-binding residues include aspartate 22, glutamate 23, and aspartate 116.

It belongs to the RNase HII family. Mn(2+) is required as a cofactor. Mg(2+) serves as cofactor.

The protein localises to the cytoplasm. The catalysed reaction is Endonucleolytic cleavage to 5'-phosphomonoester.. Its function is as follows. Endonuclease that specifically degrades the RNA of RNA-DNA hybrids. This Anaplasma phagocytophilum (strain HZ) protein is Ribonuclease HII.